The chain runs to 307 residues: NAD kinase (307 aa).

Catalysis depends on aspartate 78, which acts as the Proton acceptor. NAD(+) contacts are provided by residues 78–79 (DG), histidine 83, 154–155 (NE), arginine 165, arginine 182, aspartate 184, and glutamine 255.

The protein belongs to the NAD kinase family. The cofactor is a divalent metal cation.

The protein resides in the cytoplasm. It carries out the reaction NAD(+) + ATP = ADP + NADP(+) + H(+). Involved in the regulation of the intracellular balance of NAD and NADP, and is a key enzyme in the biosynthesis of NADP. Catalyzes specifically the phosphorylation on 2'-hydroxyl of the adenosine moiety of NAD to yield NADP. The chain is NAD kinase from Halorhodospira halophila (strain DSM 244 / SL1) (Ectothiorhodospira halophila (strain DSM 244 / SL1)).